Reading from the N-terminus, the 311-residue chain is Aspartate carbamoyltransferase catalytic subunit (311 aa).

Carbamoyl phosphate-binding residues include arginine 52 and threonine 53. Lysine 80 contributes to the L-aspartate binding site. Arginine 102, histidine 131, and glutamine 134 together coordinate carbamoyl phosphate. The L-aspartate site is built by arginine 164 and arginine 216. Positions 259 and 260 each coordinate carbamoyl phosphate.

This sequence belongs to the aspartate/ornithine carbamoyltransferase superfamily. ATCase family. As to quaternary structure, heterododecamer (2C3:3R2) of six catalytic PyrB chains organized as two trimers (C3), and six regulatory PyrI chains organized as three dimers (R2).

It catalyses the reaction carbamoyl phosphate + L-aspartate = N-carbamoyl-L-aspartate + phosphate + H(+). It participates in pyrimidine metabolism; UMP biosynthesis via de novo pathway; (S)-dihydroorotate from bicarbonate: step 2/3. In terms of biological role, catalyzes the condensation of carbamoyl phosphate and aspartate to form carbamoyl aspartate and inorganic phosphate, the committed step in the de novo pyrimidine nucleotide biosynthesis pathway. The protein is Aspartate carbamoyltransferase catalytic subunit of Lactiplantibacillus plantarum (strain ATCC BAA-793 / NCIMB 8826 / WCFS1) (Lactobacillus plantarum).